A 440-amino-acid polypeptide reads, in one-letter code: Argininosuccinate lyase (440 aa).

The protein belongs to the lyase 1 family. Argininosuccinate lyase subfamily.

The protein localises to the cytoplasm. It carries out the reaction 2-(N(omega)-L-arginino)succinate = fumarate + L-arginine. Its pathway is amino-acid biosynthesis; L-arginine biosynthesis; L-arginine from L-ornithine and carbamoyl phosphate: step 3/3. In Clostridium botulinum (strain Kyoto / Type A2), this protein is Argininosuccinate lyase.